The sequence spans 338 residues: Phenylalanine--tRNA ligase alpha subunit (338 aa).

E252 is a Mg(2+) binding site.

Belongs to the class-II aminoacyl-tRNA synthetase family. Phe-tRNA synthetase alpha subunit type 1 subfamily. Tetramer of two alpha and two beta subunits. Mg(2+) serves as cofactor.

Its subcellular location is the cytoplasm. The enzyme catalyses tRNA(Phe) + L-phenylalanine + ATP = L-phenylalanyl-tRNA(Phe) + AMP + diphosphate + H(+). The chain is Phenylalanine--tRNA ligase alpha subunit from Pseudomonas aeruginosa (strain UCBPP-PA14).